The primary structure comprises 115 residues: uncharacterized protein (115 aa).

This is an uncharacterized protein from Saccharomyces cerevisiae (strain ATCC 204508 / S288c) (Baker's yeast).